A 568-amino-acid chain; its full sequence is Proline--tRNA ligase (568 aa).

Belongs to the class-II aminoacyl-tRNA synthetase family. ProS type 1 subfamily. In terms of assembly, homodimer.

It is found in the cytoplasm. It carries out the reaction tRNA(Pro) + L-proline + ATP = L-prolyl-tRNA(Pro) + AMP + diphosphate. Catalyzes the attachment of proline to tRNA(Pro) in a two-step reaction: proline is first activated by ATP to form Pro-AMP and then transferred to the acceptor end of tRNA(Pro). As ProRS can inadvertently accommodate and process non-cognate amino acids such as alanine and cysteine, to avoid such errors it has two additional distinct editing activities against alanine. One activity is designated as 'pretransfer' editing and involves the tRNA(Pro)-independent hydrolysis of activated Ala-AMP. The other activity is designated 'posttransfer' editing and involves deacylation of mischarged Ala-tRNA(Pro). The misacylated Cys-tRNA(Pro) is not edited by ProRS. This chain is Proline--tRNA ligase, found in Macrococcus caseolyticus (strain JCSC5402) (Macrococcoides caseolyticum).